A 678-amino-acid chain; its full sequence is NADPH--cytochrome P450 reductase (678 aa).

Residue Gly-2 is modified to N-acetylglycine. Over 2–22 (GDSHEDTSATVPEAVAEEVSL) the chain is Lumenal. The helical transmembrane segment at 23-43 (FSTTDIVLFSLIVGVLTYWFI) threads the bilayer. Topologically, residues 44 to 678 (FKKKKEEIPE…KGRYSLDVWS (635 aa)) are cytoplasmic. The Flavodoxin-like domain occupies 80 to 224 (IIVFYGSQTG…DFITWREQFW (145 aa)). Residues 86 to 91 (SQTGTA), 138 to 141 (ATYG), 173 to 182 (LGNKTYEHFN), and Asp-208 each bind FMN. The FAD-binding FR-type domain maps to 279–521 (KNPFLAAVTT…FVRKSQFRLP (243 aa)). NADP(+) is bound at residue Arg-298. FAD-binding positions include Arg-424, 454-457 (RYYS), 472-474 (CAV), Tyr-478, and 488-491 (GVAT). Residues Thr-535, 596–597 (SR), 602–606 (KVYVQ), and Asp-639 each bind NADP(+). Trp-677 is an FAD binding site.

The protein belongs to the NADPH--cytochrome P450 reductase family. This sequence in the N-terminal section; belongs to the flavodoxin family. It in the C-terminal section; belongs to the flavoprotein pyridine nucleotide cytochrome reductase family. FAD is required as a cofactor. The cofactor is FMN.

The protein resides in the endoplasmic reticulum membrane. The catalysed reaction is 2 oxidized [cytochrome P450] + NADPH = 2 reduced [cytochrome P450] + NADP(+) + H(+). In terms of biological role, this enzyme is required for electron transfer from NADP to cytochrome P450 in microsomes. It can also provide electron transfer to heme oxygenase and cytochrome B5. This Mus musculus (Mouse) protein is NADPH--cytochrome P450 reductase.